We begin with the raw amino-acid sequence, 760 residues long: Probable ATP-dependent RNA helicase DDX27 (760 aa).

The segment at 1–50 (MLAELGFIRTIGENDEVPVEPESDSGDEEEEGPIVLGRKQKALQKNRSAD) is disordered. Acidic residues predominate over residues 13 to 32 (ENDEVPVEPESDSGDEEEEG). Phosphoserine occurs at positions 23, 25, and 48. A Required for interaction with the PEBOW complex motif is present at residues 55-57 (FVF). A disordered region spans residues 80–149 (KRAATTLDEK…TDYSSEDEEI (70 aa)). Residues 98 to 122 (KAEDKEAKSGKVEEKEGQADSDLKG) are compositionally biased toward basic and acidic residues. Residues 126 to 148 (PGEDEAGSKDEDSETDYSSEDEE) are compositionally biased toward acidic residues. 2 positions are modified to phosphoserine: S133 and S144. The Nuclear localization signal signature appears at 157–166 (KVKEKKKKKK). A Q motif motif is present at residues 184 to 212 (LSFQDMNLSRPLLKAITAMGFKQPTPIQK). One can recognise a Helicase ATP-binding domain in the interval 215–389 (IPVGLLGKDI…SVSLKNPVRI (175 aa)). An ATP-binding site is contributed by 228–235 (AATGTGKT). Positions 337–340 (DEAD) match the DEAD box motif. The region spanning 419-569 (IVAALLMRTF…DVILKFRDKI (151 aa)) is the Helicase C-terminal domain. Disordered stretches follow at residues 605–624 (KGKETADQEPERSWFQTKEE) and 679–760 (RLAK…KRKK). Basic residues-rich tracts occupy residues 682–691 (KRNRRTKRAR) and 744–760 (RQRRGNFKSKSRYKRKK).

The protein belongs to the DEAD box helicase family. DDX27/DRS1 subfamily. Associates with PeBoW complex, composed of BOP1, PES1 and WDR12. Interacts directly with BOP1 and PES1.

It is found in the nucleus. The protein resides in the nucleolus. It localises to the chromosome. The enzyme catalyses ATP + H2O = ADP + phosphate + H(+). Probable ATP-dependent RNA helicase. Component of the nucleolar ribosomal RNA (rRNA) processing machinery that regulates 3' end formation of ribosomal 47S rRNA. In Mus musculus (Mouse), this protein is Probable ATP-dependent RNA helicase DDX27 (Ddx27).